The primary structure comprises 1098 residues: Probable DNA-directed RNA polymerase (1098 aa).

Over residues 1–24 (PIRESVRVSTDRDPDLEDEKREQL) the composition is skewed to basic and acidic residues. The interval 1-26 (PIRESVRVSTDRDPDLEDEKREQLGE) is disordered. Active-site residues include aspartate 663, lysine 750, and aspartate 915.

This sequence belongs to the phage and mitochondrial RNA polymerase family.

It is found in the mitochondrion. The enzyme catalyses RNA(n) + a ribonucleoside 5'-triphosphate = RNA(n+1) + diphosphate. In terms of biological role, DNA-dependent RNA polymerase catalyzes the transcription of DNA into RNA using the four ribonucleoside triphosphates as substrates. This is Probable DNA-directed RNA polymerase from Zea mays (Maize).